Here is a 101-residue protein sequence, read N- to C-terminus: Small ribosomal subunit protein uS14 (101 aa).

This sequence belongs to the universal ribosomal protein uS14 family. In terms of assembly, part of the 30S ribosomal subunit. Contacts proteins S3 and S10.

Its function is as follows. Binds 16S rRNA, required for the assembly of 30S particles and may also be responsible for determining the conformation of the 16S rRNA at the A site. The polypeptide is Small ribosomal subunit protein uS14 (Haemophilus influenzae (strain 86-028NP)).